Consider the following 173-residue polypeptide: Insertion element IS1397 uncharacterized 20.1 kDa protein (173 aa).

Residues 115–135 (KSMTRSDDTHENEANMTPEEM) form a disordered region.

It belongs to the IS150/IS1296 orfA family.

In Escherichia coli, this protein is Insertion element IS1397 uncharacterized 20.1 kDa protein.